We begin with the raw amino-acid sequence, 469 residues long: 3-isopropylmalate dehydratase large subunit (469 aa).

Cys350, Cys410, and Cys413 together coordinate [4Fe-4S] cluster.

It belongs to the aconitase/IPM isomerase family. LeuC type 1 subfamily. As to quaternary structure, heterodimer of LeuC and LeuD. Requires [4Fe-4S] cluster as cofactor.

It carries out the reaction (2R,3S)-3-isopropylmalate = (2S)-2-isopropylmalate. Its pathway is amino-acid biosynthesis; L-leucine biosynthesis; L-leucine from 3-methyl-2-oxobutanoate: step 2/4. Functionally, catalyzes the isomerization between 2-isopropylmalate and 3-isopropylmalate, via the formation of 2-isopropylmaleate. The polypeptide is 3-isopropylmalate dehydratase large subunit (Rhizobium rhizogenes (strain K84 / ATCC BAA-868) (Agrobacterium radiobacter)).